Here is a 757-residue protein sequence, read N- to C-terminus: Mitofusin-2 (757 aa).

Residues 1–604 lie on the Cytoplasmic side of the membrane; it reads MSLLFSRCNS…TQEELMVSMV (604 aa). Residues 30 to 94 form a part of a helix bundle domain, formed by helices from N-terminal and C-terminal regions region; the sequence is KHFVTAKKKI…VRGISEVLAR (65 aa). Residues 93-342 form the Dynamin-type G domain; sequence ARRHMKVAFF…VRMFEFQNFE (250 aa). The interval 103-110 is G1 motif; it reads GRTSNGKS. 106–111 lines the GTP pocket; that stretch reads SNGKST. A Phosphothreonine; by PINK1 modification is found at T111. Positions 129 to 130 are G2 motif; sequence TT. The G3 motif stretch occupies residues 199 to 202; that stretch reads DSPG. 258–261 is a binding site for GTP; sequence NRWD. Residues 258–261 are G4 motif; the sequence is NRWD. Residue E288 is a region of interest, G5 motif. The GTP site is built by S305 and K307. Residues 359–385 are part of a helix bundle domain, formed by helices from N-terminal and C-terminal regions; the sequence is EQHTVRAKQIAEAVRLIMDSLHIAAQE. Residues 406–435 adopt a coiled-coil conformation; the sequence is KQLELLAQDYKLRIKQMTEEVERQVSTAMA. S442 carries the post-translational modification Phosphoserine; by PINK1. The chain crosses the membrane as a helical span at residues 605-625; sequence TGLASLTSRTSMGILVVGGVV. W626 is a topological domain (mitochondrial intermembrane). A helical membrane pass occupies residues 627-647; the sequence is KAVGWRLIALSFGLYGLLYVY. Over 648 to 757 the chain is Cytoplasmic; that stretch reads ERLTWTTRAK…FIHQYLQPSR (110 aa). Positions 696–738 form a coiled coil; sequence FAHLCQQVDITRDNLEQEIAAMNKKVEALDSLQSKAKLLRNKA. Residues 722-753 form a part of a helix bundle domain, formed by helices from N-terminal and C-terminal regions region; the sequence is EALDSLQSKAKLLRNKAGWLDSELNMFIHQYL.

The protein belongs to the TRAFAC class dynamin-like GTPase superfamily. Dynamin/Fzo/YdjA family. Mitofusin subfamily. In terms of assembly, forms homomultimers and heteromultimers with MFN1. Oligomerization is essential for mitochondrion fusion. Interacts with VAT1. Interacts with STOML2; may form heterooligomers. Interacts (phosphorylated) with PRKN. Interacts with EIF2AK3. Interacts with THG1L; THG1L probably functions as a guanyl-nucleotide exchange factor/GEF, activating MFN2. In terms of processing, phosphorylated by PINK1. Ubiquitinated by non-degradative ubiquitin by PRKN, promoting mitochondrial fusion; deubiquitination by USP30 inhibits mitochondrial fusion. Ubiquitinated by HUWE1 when dietary stearate (C18:0) levels are low; ubiquitination inhibits mitochondrial fusion. As to expression, ubiquitous. In brain, it is more expressed than MFN1, while it is expressed at a weaker level than MFN1 in heart and testis. Expressed at high level in elongating spermatids of seminiferous tubules. Expression is markedly down-regulated in highly proliferative vascular smooth muscle cells (VSMCs) from the genetic hypertensive animal model SHR, as well as in balloon-injured Wistar Kyoto arteries.

It is found in the mitochondrion outer membrane. The enzyme catalyses GTP + H2O = GDP + phosphate + H(+). Its function is as follows. Mitochondrial outer membrane GTPase that mediates mitochondrial clustering and fusion. Mitochondria are highly dynamic organelles, and their morphology is determined by the equilibrium between mitochondrial fusion and fission events. Overexpression induces the formation of mitochondrial networks. Membrane clustering requires GTPase activity and may involve a major rearrangement of the coiled coil domains. Plays a central role in mitochondrial metabolism and may be associated with obesity and/or apoptosis processes. Plays an important role in the regulation of vascular smooth muscle cell proliferation. Involved in the clearance of damaged mitochondria via selective autophagy (mitophagy). Is required for PRKN recruitment to dysfunctional mitochondria. Involved in the control of unfolded protein response (UPR) upon ER stress including activation of apoptosis and autophagy during ER stress. Acts as an upstream regulator of EIF2AK3 and suppresses EIF2AK3 activation under basal conditions. The chain is Mitofusin-2 (Mfn2) from Rattus norvegicus (Rat).